A 271-amino-acid polypeptide reads, in one-letter code: Intercellular adhesion molecule 4 (271 aa).

An N-terminal signal peptide occupies residues 1–22; that stretch reads MGSLFPLSLLFFLAAAYPGVGS. Over 23 to 240 the chain is Extracellular; sequence ALGRRTKRAQ…MLAWSPAPTA (218 aa). Ig-like C2-type domains follow at residues 62 to 124 and 146 to 217; these read GKSV…TRWA and GRKY…LNLD. N-linked (GlcNAc...) asparagine glycans are attached at residues N68, N78, N190, and N223. Cystine bridges form between C69/C113, C69/C117, C73/C117, and C153/C210. A helical transmembrane segment spans residues 241–261; that stretch reads LASGSIAALVGILLTVGAAYL. The Cytoplasmic segment spans residues 262 to 271; it reads CKCLAMKSQA.

Belongs to the immunoglobulin superfamily. ICAM family. In terms of processing, N- and O-glycosylated. In terms of tissue distribution, erythrocytes.

It localises to the cell membrane. The protein localises to the secreted. ICAM proteins are ligands for the leukocyte adhesion protein LFA-1 (integrin alpha-L/beta-2). ICAM4 is also a ligand for alpha-4/beta-1 and alpha-V integrins. The chain is Intercellular adhesion molecule 4 (ICAM4) from Homo sapiens (Human).